A 375-amino-acid chain; its full sequence is Acetylornithine aminotransferase (375 aa).

Pyridoxal 5'-phosphate is bound by residues Gly-93–Thr-94 and Phe-120. Arg-123 is a binding site for N(2)-acetyl-L-ornithine. Pyridoxal 5'-phosphate is bound at residue Asp-205–Gln-208. An N6-(pyridoxal phosphate)lysine modification is found at Lys-234. Residue Thr-262 participates in N(2)-acetyl-L-ornithine binding. Pyridoxal 5'-phosphate is bound at residue Thr-263.

Belongs to the class-III pyridoxal-phosphate-dependent aminotransferase family. ArgD subfamily. As to quaternary structure, homodimer. Pyridoxal 5'-phosphate is required as a cofactor.

It is found in the cytoplasm. It catalyses the reaction N(2)-acetyl-L-ornithine + 2-oxoglutarate = N-acetyl-L-glutamate 5-semialdehyde + L-glutamate. It functions in the pathway amino-acid biosynthesis; L-arginine biosynthesis; N(2)-acetyl-L-ornithine from L-glutamate: step 4/4. This chain is Acetylornithine aminotransferase, found in Staphylococcus epidermidis (strain ATCC 12228 / FDA PCI 1200).